The chain runs to 933 residues: Envelope glycoprotein B (933 aa).

The N-terminal stretch at 1 to 36 (MPRPRPRALRGSSPGWALVAAVAVGAALLMATLAVA) is a signal peptide. Residues 36–49 (AAPPGPRGPAARSP) show a composition bias toward low complexity. A disordered region spans residues 36 to 115 (AAPPGPRGPA…GNGTRSAARR (80 aa)). At 37 to 797 (APPGPRGPAA…SGVSSFLSNP (761 aa)) the chain is on the virion surface side. The span at 54–69 (ASVEPVEDGDYDEYDD) shows a compositional bias: acidic residues. 2 N-linked (GlcNAc...) asparagine; by host glycosylation sites follow: N107 and N161. Disulfide bonds link C136–C596, C153–C552, C227–C291, C384–C432, and C619–C656. 2 involved in fusion and/or binding to host membrane regions span residues 193–199 (TWQGSRY) and 278–285 (AHAGFYKT). N-linked (GlcNAc...) asparagine; by host glycosylation is found at N418 and N450. 2 N-linked (GlcNAc...) asparagine; by host glycosylation sites follow: N697 and N747. Hydrophobic membrane proximal region regions lie at residues 742–795 (IDRI…SFLS) and 754–795 (LMAG…SFLS). A helical membrane pass occupies residues 798 to 818 (FGALAVGLLVLAGLVAAFFAM). At 819 to 933 (RYIMRLRANP…SKDDEDGADP (115 aa)) the chain is on the intravirion side. The Golgi targeting motif lies at 881–884 (YMTL). Positions 920 to 923 (YQPL) match the Internalization motif motif.

This sequence belongs to the herpesviridae glycoprotein B family. Homotrimer; disulfide-linked. Binds to heparan sulfate proteoglycans. Interacts with gH/gL heterodimer.

Its subcellular location is the virion membrane. It localises to the host cell membrane. It is found in the host endosome membrane. The protein resides in the host Golgi apparatus membrane. Its function is as follows. Envelope glycoprotein that forms spikes at the surface of virion envelope. Essential for the initial attachment to heparan sulfate moieties of the host cell surface proteoglycans. Involved in fusion of viral and cellular membranes leading to virus entry into the host cell. Following initial binding to its host receptors, membrane fusion is mediated by the fusion machinery composed at least of gB and the heterodimer gH/gL. May be involved in the fusion between the virion envelope and the outer nuclear membrane during virion egress. The sequence is that of Envelope glycoprotein B from Herpesvirus ateles type 1 (strain Lennette).